We begin with the raw amino-acid sequence, 152 residues long: Large ribosomal subunit protein bL9 (152 aa).

Belongs to the bacterial ribosomal protein bL9 family.

Its function is as follows. Binds to the 23S rRNA. The protein is Large ribosomal subunit protein bL9 of Microcystis aeruginosa (strain NIES-843 / IAM M-2473).